Consider the following 173-residue polypeptide: Shikimate kinase (173 aa).

16–21 (GSGKTT) contacts ATP. Thr-20 contacts Mg(2+). Residues Asp-38, Arg-62, and Gly-83 each coordinate substrate. ATP is bound at residue Arg-120. Arg-139 contributes to the substrate binding site. Arg-156 contributes to the ATP binding site.

It belongs to the shikimate kinase family. As to quaternary structure, monomer. Mg(2+) serves as cofactor.

The protein localises to the cytoplasm. It catalyses the reaction shikimate + ATP = 3-phosphoshikimate + ADP + H(+). Its pathway is metabolic intermediate biosynthesis; chorismate biosynthesis; chorismate from D-erythrose 4-phosphate and phosphoenolpyruvate: step 5/7. In terms of biological role, catalyzes the specific phosphorylation of the 3-hydroxyl group of shikimic acid using ATP as a cosubstrate. The polypeptide is Shikimate kinase (Corynebacterium diphtheriae (strain ATCC 700971 / NCTC 13129 / Biotype gravis)).